A 525-amino-acid polypeptide reads, in one-letter code: Acetyl-CoA hydrolase (525 aa).

280 to 284 (GIGNI) contributes to the CoA binding site. Glu305 acts as the 5-glutamyl coenzyme A thioester intermediate in catalysis. The CoA site is built by Asn395 and Gly399.

The protein belongs to the acetyl-CoA hydrolase/transferase family.

The protein resides in the cytoplasm. It catalyses the reaction acetyl-CoA + H2O = acetate + CoA + H(+). In terms of biological role, required for utilization of acetate. The chain is Acetyl-CoA hydrolase (acu-8) from Neurospora crassa (strain ATCC 24698 / 74-OR23-1A / CBS 708.71 / DSM 1257 / FGSC 987).